The sequence spans 685 residues: MESTTAFSEVTSALGIENVKIMEPFLWMLVLGFVIAFVLAFSVGANDVANSFGTAVGSGVVTLRQACILASIFETVGSVLLGAKVSETIRKGLIDVNTYNTTQELLMAGSISAMFGSAVWQLAASFLKLPISGTHCIVGATIGFSLVAKGQQAIQWYELLRIVLSWFISPLLSGIMSALLFYFVRMFILRKADPVPNGLRALPIFYACTIGVNLFSIMYSGAPLLGFDKIPLWGIILISVGCAVLCALVVWFFVCPRMKRKIECEFKSSPSESPLMDKKNRELRCPILKPDPEDIKLPVDGGIVAEVKVPILDMVSVSRTEERTVTFKMGDCDDAVEKEKLNSMETNIDQPMNGSVQLPNGNHVQFSQTVSNQMNSSGQYQYHTVHKDSGLYKDLLHKLHLAKVGDCMGDSGDKPLRRNNSYTSYTMAICGMPLDSLRNRDAEARPDEAEKFTVHGADGKKRIRMDSYTSYCNAVADPQMDVEAEEQEEGSIEDVATDRKSSSSSLEERHDQDKPEVSLLFQFLQILTACFGSFAHGGNDVSNAIGPLVALYLVYESGDVTTKAATPIWLLLYGGVGICIGLWVWGRRVIQTMGKDLTPITPSSGFSIELASALTVVIASNVGLPISTTHCKVGSVVSVGWLRSKKAVDWRLFRNIFLAWFVTVPISGLISAAIMAVFKYAILKK.

The next 6 membrane-spanning stretches (helical) occupy residues 25–45, 66–86, 106–126, 162–182, 201–221, and 234–254; these read FLWM…SVGA, ACIL…AKVS, LMAG…AASF, IVLS…LLFY, ALPI…MYSG, and GIIL…WFFV. The span at 482-492 shows a compositional bias: acidic residues; the sequence is VEAEEQEEGSI. Residues 482 to 513 form a disordered region; that stretch reads VEAEEQEEGSIEDVATDRKSSSSSLEERHDQD. The segment covering 496-513 has biased composition (basic and acidic residues); sequence ATDRKSSSSSLEERHDQD. 4 helical membrane passes run 517–537, 565–585, 606–626, and 656–676; these read VSLL…FAHG, ATPI…LWVW, FSIE…GLPI, and IFLA…AIMA.

Belongs to the inorganic phosphate transporter (PiT) (TC 2.A.20) family.

Its subcellular location is the cell membrane. It carries out the reaction 2 Na(+)(out) + phosphate(out) = 2 Na(+)(in) + phosphate(in). In terms of biological role, sodium-phosphate symporter which preferentially transports the monovalent form of phosphate with a stoichiometry of two sodium ions per phosphate ion. In Xenopus tropicalis (Western clawed frog), this protein is Sodium-dependent phosphate transporter 1 (slc20a1).